Consider the following 62-residue polypeptide: Alpha-conotoxin-like Ca1.1 (62 aa).

The N-terminal stretch at 1 to 21 is a signal peptide; it reads MGMRMMFTVFLLVVLATTVVS. Residues 22–46 constitute a propeptide that is removed on maturation; the sequence is FTSDRASDGRNAAANAFDLIALIAR. Q47 carries the pyrrolidone carboxylic acid modification. Cystine bridges form between C49–C55 and C50–C61.

The protein belongs to the conotoxin A superfamily. As to expression, expressed by the venom duct.

It localises to the secreted. Its function is as follows. Alpha-conotoxins act on postsynaptic membranes, they bind to the nicotinic acetylcholine receptors (nAChR) and thus inhibit them. This is Alpha-conotoxin-like Ca1.1 from Conus caracteristicus (Characteristic cone).